A 581-amino-acid chain; its full sequence is MEYYDTDSEDEDEPCSPTVTSVFSANNRLSCSSLKNEKTPLTTVFTKKWLVKSIPMPSDYKRGIYAEDGPYDEVTYVLSGSNFTFTEKSAYVLDIDGLVTFTNLKHKVVRNKRKTIRRAITYVPGDVLMRKHKSIVRVLTCDGVLFIKGLSFASDAALWHVLCSFLNDRPNPHYLCYCTFKTFANILLTLEYRCRVNRALILVNKLLAVGYYLVGNFNYVSPQCSLLGYLGDVLTAQVVAWSRLSQIAITSDSRKIREAFTCMKHLLTVSWLTHERTDLSSDSIYKTLLAHEHIIAGIFCKCDTCRPPPAAINHNTALRVKNWHENNKNRLATDPNLQFRTRWNIEVNGGPELPRLFHSINFPTMYRGILRDRYLRQFYKFQNMVRFHVLTHTCSLQADELLFFQWWNEFMFMYFLRLYLSKCVKSDYTQAVNMFTYYLKAFRLVVCDIARGKCVNPSISELCEKVAHIVDHLVEDTSMASLLREICNFNRIIRDPKHAWIFPHYLRDDTGLQGKVLLEHILRDKFLSLRLDDPLLEHVGLLRSKILNESVKITFNEFTLRQLERSMWLENLLENHRSRLY.

The chain is Protein ORF B from Elephas maximus (Indian elephant).